The chain runs to 144 residues: (R)-specific enoyl-CoA hydratase (144 aa).

Residues 13–128 (DIKEGQSASL…TFRTTCTVAG (116 aa)) enclose the MaoC-like domain.

As to quaternary structure, homotetramer.

It carries out the reaction a (3R)-3-hydroxyacyl-CoA = a (2E)-enoyl-CoA + H2O. In terms of biological role, catalyzes the hydration of trans-2-enoyl-CoAs with a chain-length of 4-6 carbon atoms, forming the corresponding (3R)-3-hydroxyacyl-CoAs, which can then be utilized for the production of polyhydroxyalkanoates (PHA) polymers. Cannot use trans-2,3-octenoyl-CoA as substrate. The chain is (R)-specific enoyl-CoA hydratase from Rhodospirillum rubrum (strain ATCC 11170 / ATH 1.1.1 / DSM 467 / LMG 4362 / NCIMB 8255 / S1).